Reading from the N-terminus, the 353-residue chain is Photosystem II protein D1 (353 aa).

The residue at position 2 (Thr2) is an N-acetylthreonine. At Thr2 the chain carries Phosphothreonine. 3 helical membrane-spanning segments follow: residues 29-46, 118-133, and 142-156; these read YIGW…TATA, HFLL…EWEL, and WIAV…AAAA. Residue His118 participates in chlorophyll a binding. Residue Tyr126 participates in pheophytin a binding. The [CaMn4O5] cluster site is built by Asp170 and Glu189. The chain crosses the membrane as a helical span at residues 197–218; sequence FHMLGVAGVFGGSLFSAMHGSL. His198 lines the chlorophyll a pocket. A quinone contacts are provided by residues His215 and 264–265; that span reads SF. His215 is a Fe cation binding site. His272 contributes to the Fe cation binding site. Residues 274-288 traverse the membrane as a helical segment; that stretch reads FLAAWPVVGIWFTAL. [CaMn4O5] cluster-binding residues include His332, Glu333, Asp342, and Ala344. Positions 345–353 are excised as a propeptide; the sequence is SVEAPSVNG.

The protein belongs to the reaction center PufL/M/PsbA/D family. PSII is composed of 1 copy each of membrane proteins PsbA, PsbB, PsbC, PsbD, PsbE, PsbF, PsbH, PsbI, PsbJ, PsbK, PsbL, PsbM, PsbT, PsbX, PsbY, PsbZ, Psb30/Ycf12, at least 3 peripheral proteins of the oxygen-evolving complex and a large number of cofactors. It forms dimeric complexes. The D1/D2 heterodimer binds P680, chlorophylls that are the primary electron donor of PSII, and subsequent electron acceptors. It shares a non-heme iron and each subunit binds pheophytin, quinone, additional chlorophylls, carotenoids and lipids. D1 provides most of the ligands for the Mn4-Ca-O5 cluster of the oxygen-evolving complex (OEC). There is also a Cl(-1) ion associated with D1 and D2, which is required for oxygen evolution. The PSII complex binds additional chlorophylls, carotenoids and specific lipids. is required as a cofactor. Post-translationally, tyr-161 forms a radical intermediate that is referred to as redox-active TyrZ, YZ or Y-Z. C-terminally processed by CTPA; processing is essential to allow assembly of the oxygen-evolving complex and thus photosynthetic growth.

It is found in the plastid. The protein resides in the chloroplast thylakoid membrane. It catalyses the reaction 2 a plastoquinone + 4 hnu + 2 H2O = 2 a plastoquinol + O2. Photosystem II (PSII) is a light-driven water:plastoquinone oxidoreductase that uses light energy to abstract electrons from H(2)O, generating O(2) and a proton gradient subsequently used for ATP formation. It consists of a core antenna complex that captures photons, and an electron transfer chain that converts photonic excitation into a charge separation. The D1/D2 (PsbA/PsbD) reaction center heterodimer binds P680, the primary electron donor of PSII as well as several subsequent electron acceptors. This is Photosystem II protein D1 from Huperzia lucidula (Shining clubmoss).